We begin with the raw amino-acid sequence, 354 residues long: Fructose-bisphosphate aldolase (354 aa).

Ser61 is a D-glyceraldehyde 3-phosphate binding site. Catalysis depends on Asp104, which acts as the Proton donor. The Zn(2+) site is built by His105, Asp139, Glu169, and His221. Gly222 is a binding site for dihydroxyacetone phosphate. His260 is a Zn(2+) binding site. Dihydroxyacetone phosphate is bound by residues 261–263 (GGS) and 282–285 (NIDT).

It belongs to the class II fructose-bisphosphate aldolase family. As to quaternary structure, homodimer. The cofactor is Zn(2+).

The catalysed reaction is beta-D-fructose 1,6-bisphosphate = D-glyceraldehyde 3-phosphate + dihydroxyacetone phosphate. It participates in carbohydrate degradation; glycolysis; D-glyceraldehyde 3-phosphate and glycerone phosphate from D-glucose: step 4/4. Catalyzes the aldol condensation of dihydroxyacetone phosphate (DHAP or glycerone-phosphate) with glyceraldehyde 3-phosphate (G3P) to form fructose 1,6-bisphosphate (FBP) in gluconeogenesis and the reverse reaction in glycolysis. The chain is Fructose-bisphosphate aldolase (fba) from Campylobacter jejuni subsp. jejuni serotype O:2 (strain ATCC 700819 / NCTC 11168).